Here is a 659-residue protein sequence, read N- to C-terminus: Probable acyl-coenzyme A oxidase acox-1.5 (659 aa).

FAD contacts are provided by residues 148–151, 156–157, and Gly190; these read YAQT and GT. Substrate-binding positions include 284-287 and Arg294; that span reads KVGY. Residues Arg319 and 339-342 contribute to the FAD site; that span reads QQYR. His395 and Gln403 together coordinate ATP. Gly410 serves as a coordination point for FAD. Substrate is bound at residue 432–433; sequence YE. The active-site Proton acceptor is Glu433. FAD is bound at residue Glu435. Residue 524–527 participates in ATP binding; that stretch reads KAAR. Positions 657-659 match the Microbody targeting signal motif; that stretch reads SKL.

It belongs to the acyl-CoA oxidase family. In terms of assembly, homodimer. The cofactor is FAD.

The protein resides in the peroxisome. It functions in the pathway lipid metabolism; peroxisomal fatty acid beta-oxidation. Its activity is regulated as follows. Activated by ATP. ATP binding leads to a conformational change that promotes FAD cofactor binding and enzyme activity. ATP binding likely occurs during acox-1.5 folding and/or dimer formation. Involved in the first step of peroxisomal beta-oxidation by catalyzing the desaturation of fatty acid-derived side chains. The chain is Probable acyl-coenzyme A oxidase acox-1.5 from Caenorhabditis elegans.